The following is a 247-amino-acid chain: NAD(P)H-quinone oxidoreductase subunit K, chloroplastic (247 aa).

Residues C64, C65, C129, and C160 each coordinate [4Fe-4S] cluster.

This sequence belongs to the complex I 20 kDa subunit family. As to quaternary structure, NDH is composed of at least 16 different subunits, 5 of which are encoded in the nucleus. Requires [4Fe-4S] cluster as cofactor.

The protein localises to the plastid. It is found in the chloroplast thylakoid membrane. It carries out the reaction a plastoquinone + NADH + (n+1) H(+)(in) = a plastoquinol + NAD(+) + n H(+)(out). The catalysed reaction is a plastoquinone + NADPH + (n+1) H(+)(in) = a plastoquinol + NADP(+) + n H(+)(out). Its function is as follows. NDH shuttles electrons from NAD(P)H:plastoquinone, via FMN and iron-sulfur (Fe-S) centers, to quinones in the photosynthetic chain and possibly in a chloroplast respiratory chain. The immediate electron acceptor for the enzyme in this species is believed to be plastoquinone. Couples the redox reaction to proton translocation, and thus conserves the redox energy in a proton gradient. This is NAD(P)H-quinone oxidoreductase subunit K, chloroplastic from Mesostigma viride (Green alga).